A 69-amino-acid chain; its full sequence is Toxin Lc a (69 aa).

Cystine bridges form between cysteine 3-cysteine 20, cysteine 13-cysteine 41, cysteine 45-cysteine 56, and cysteine 57-cysteine 62.

It belongs to the three-finger toxin family. Long-chain subfamily. Type II alpha-neurotoxin sub-subfamily. As to expression, expressed by the venom gland.

The protein localises to the secreted. In terms of biological role, binds with high affinity to muscular nicotinic acetylcholine receptors (nAChRs), whereas it binds with a low affinity to neuronal alpha-7/CHRNA7 nAChRs. The polypeptide is Toxin Lc a (Laticauda colubrina (Yellow-lipped sea krait)).